A 308-amino-acid chain; its full sequence is Elongation factor Ts (308 aa).

Positions 80–83 (TDFV) are involved in Mg(2+) ion dislocation from EF-Tu.

Belongs to the EF-Ts family.

It is found in the cytoplasm. Its function is as follows. Associates with the EF-Tu.GDP complex and induces the exchange of GDP to GTP. It remains bound to the aminoacyl-tRNA.EF-Tu.GTP complex up to the GTP hydrolysis stage on the ribosome. The chain is Elongation factor Ts from Erythrobacter litoralis (strain HTCC2594).